We begin with the raw amino-acid sequence, 423 residues long: 3-phosphoshikimate 1-carboxyvinyltransferase (423 aa).

Lys-21, Ser-22, and Arg-26 together coordinate 3-phosphoshikimate. Lys-21 lines the phosphoenolpyruvate pocket. Phosphoenolpyruvate contacts are provided by Gly-92 and Arg-120. 5 residues coordinate 3-phosphoshikimate: Ser-166, Gln-168, Ser-194, Asp-310, and Lys-337. Gln-168 is a binding site for phosphoenolpyruvate. Catalysis depends on Asp-310, which acts as the Proton acceptor. Phosphoenolpyruvate contacts are provided by Arg-341, Arg-384, and Lys-409.

The protein belongs to the EPSP synthase family. In terms of assembly, monomer.

Its subcellular location is the cytoplasm. The catalysed reaction is 3-phosphoshikimate + phosphoenolpyruvate = 5-O-(1-carboxyvinyl)-3-phosphoshikimate + phosphate. It functions in the pathway metabolic intermediate biosynthesis; chorismate biosynthesis; chorismate from D-erythrose 4-phosphate and phosphoenolpyruvate: step 6/7. In terms of biological role, catalyzes the transfer of the enolpyruvyl moiety of phosphoenolpyruvate (PEP) to the 5-hydroxyl of shikimate-3-phosphate (S3P) to produce enolpyruvyl shikimate-3-phosphate and inorganic phosphate. This chain is 3-phosphoshikimate 1-carboxyvinyltransferase, found in Syntrophobacter fumaroxidans (strain DSM 10017 / MPOB).